The following is a 514-amino-acid chain: Photosystem II CP47 reaction center protein (514 aa).

6 helical membrane-spanning segments follow: residues 21–36, 109–123, 148–164, 211–226, 245–260, and 465–480; these read AVHLMHTALVLGWAGS, IVLSGLFFLAAVWHW, GGHLFLLGFLCFNFGTF, IAAGITLMIGGVFHLT, ALASAIAAVFGAAFVV, and CFALLFFFGHIWHGAR.

This sequence belongs to the PsbB/PsbC family. PsbB subfamily. In terms of assembly, PSII is composed of 1 copy each of membrane proteins PsbA, PsbB, PsbC, PsbD, PsbE, PsbF, PsbH, PsbI, PsbJ, PsbK, PsbL, PsbM, PsbT, PsbX, PsbY, PsbZ, Psb30/Ycf12, peripheral proteins PsbO, CyanoQ (PsbQ), PsbU, PsbV and a large number of cofactors. It forms dimeric complexes. It depends on Binds multiple chlorophylls. PSII binds additional chlorophylls, carotenoids and specific lipids. as a cofactor.

It localises to the cellular thylakoid membrane. Functionally, one of the components of the core complex of photosystem II (PSII). It binds chlorophyll and helps catalyze the primary light-induced photochemical processes of PSII. PSII is a light-driven water:plastoquinone oxidoreductase, using light energy to abstract electrons from H(2)O, generating O(2) and a proton gradient subsequently used for ATP formation. The sequence is that of Photosystem II CP47 reaction center protein from Prochlorothrix hollandica.